Consider the following 194-residue polypeptide: dTTP/UTP pyrophosphatase (194 aa).

D69 serves as the catalytic Proton acceptor.

It belongs to the Maf family. YhdE subfamily. It depends on a divalent metal cation as a cofactor.

Its subcellular location is the cytoplasm. The enzyme catalyses dTTP + H2O = dTMP + diphosphate + H(+). It carries out the reaction UTP + H2O = UMP + diphosphate + H(+). Its function is as follows. Nucleoside triphosphate pyrophosphatase that hydrolyzes dTTP and UTP. May have a dual role in cell division arrest and in preventing the incorporation of modified nucleotides into cellular nucleic acids. This chain is dTTP/UTP pyrophosphatase, found in Symbiobacterium thermophilum (strain DSM 24528 / JCM 14929 / IAM 14863 / T).